Reading from the N-terminus, the 183-residue chain is ADP-ribosylation factor-like protein 5 (183 aa).

GTP-binding positions include 27 to 34, 70 to 74, and 129 to 132; these read GLNAAGKT, DLGGQ, and NKQD.

The protein belongs to the small GTPase superfamily. Arf family.

Its function is as follows. May bind and exchange GTP and GDP. The polypeptide is ADP-ribosylation factor-like protein 5 (arl5) (Dictyostelium discoideum (Social amoeba)).